Reading from the N-terminus, the 1106-residue chain is Translation initiation factor IF-2 (1106 aa).

Composition is skewed to low complexity over residues 57–72 and 81–97; these read GKAA…PDAG and APST…SAPP. 2 disordered regions span residues 57–434 and 466–497; these read GKAA…QKVH and PSKP…RQRR. 2 stretches are compositionally biased toward pro residues: residues 113 to 123 and 138 to 148; these read PAKPAPSAPPS. Residues 172–199 are compositionally biased toward low complexity; that stretch reads AKPVAKPASAPAPARPAQPLRPQASNRP. Pro residues-rich tracts occupy residues 200–214 and 223–235; these read PQQP…PAAK and TAPP…PGAP. 3 stretches are compositionally biased toward low complexity: residues 251–292, 319–329, and 395–405; these read PNQQ…QQRR, PQGRQGGAPSR, and YRPAAAPGMAG. The segment covering 408–422 has biased composition (basic and acidic residues); it reads RRPDWDDSARLDALR. Over residues 482-497 the composition is skewed to basic residues; it reads ALRRRKKETTRQRQRR. The tr-type G domain maps to 598 to 771; the sequence is RRPPVVTVMG…LLVTEVEDLK (174 aa). The interval 607–614 is G1; that stretch reads GHVDHGKT. Position 607 to 614 (607 to 614) interacts with GTP; that stretch reads GHVDHGKT. Residues 632 to 636 form a G2 region; sequence GITQH. The segment at 657-660 is G3; that stretch reads DTPG. GTP-binding positions include 657 to 661 and 711 to 714; these read DTPGH and NKVD. The tract at residues 711–714 is G4; the sequence is NKVD. Residues 747–749 form a G5 region; sequence SAL.

The protein belongs to the TRAFAC class translation factor GTPase superfamily. Classic translation factor GTPase family. IF-2 subfamily.

The protein resides in the cytoplasm. In terms of biological role, one of the essential components for the initiation of protein synthesis. Protects formylmethionyl-tRNA from spontaneous hydrolysis and promotes its binding to the 30S ribosomal subunits. Also involved in the hydrolysis of GTP during the formation of the 70S ribosomal complex. This Synechococcus sp. (strain RCC307) protein is Translation initiation factor IF-2.